The following is a 535-amino-acid chain: Cytochrome c oxidase subunit 1 (535 aa).

Residues 17-37 form a helical membrane-spanning segment; sequence ILYFIFAIFSGVIGSTMSLII. 3 residues coordinate Ca(2+): Glu-40, Ala-43, and Gly-45. 6 helical membrane-spanning segments follow: residues 58–78, 104–124, 147–167, 184–204, 236–256, and 268–288; these read VLVVGHALLMIFFLVMPGLVG, FWLLPPALVCLVASTLIESWA, LGIFAIHLTSISSLLGAINFI, PLFVWAIIITAVMLLLSLPVL, LFWFFGHPEVYILIVPGFGII, and VFGEISMVYAMASIAFLGFLV. Position 63 (His-63) interacts with Fe(II)-heme a. Position 242 (His-242) interacts with Cu cation. The 1'-histidyl-3'-tyrosine (His-Tyr) cross-link spans 242-246; sequence HPEVY. Tyr-246 serves as a coordination point for O2. His-291 and His-292 together coordinate Cu cation. Transmembrane regions (helical) follow at residues 311 to 331 and 339 to 359; these read MVIAVPTGIKIFSWLATLYGG and MLYAIAFLFLFTIGGLTGVAL. The Mg(2+) site is built by His-369 and Asp-370. 2 consecutive transmembrane segments (helical) span residues 373–393 and 413–433; these read YVVGHFHYVLSMGAIFSLFAG and IQFWLIFVGANVIFMPMHFLG. A heme a3-binding site is contributed by His-377. Residue His-379 coordinates Fe(II)-heme a. Position 442 (Pro-442) interacts with Ca(2+). A helical transmembrane segment spans residues 453–473; that stretch reads YVSSIGSVIAIISLALFIYII.

Belongs to the heme-copper respiratory oxidase family. In terms of assembly, component of the cytochrome c oxidase (complex IV, CIV), a multisubunit enzyme composed of a catalytic core of 3 subunits and several supernumerary subunits. The complex exists as a monomer or a dimer and forms supercomplexes (SCs) in the inner mitochondrial membrane with ubiquinol-cytochrome c oxidoreductase (cytochrome b-c1 complex, complex III, CIII). It depends on heme as a cofactor. Cu cation serves as cofactor.

The protein resides in the mitochondrion inner membrane. It carries out the reaction 4 Fe(II)-[cytochrome c] + O2 + 8 H(+)(in) = 4 Fe(III)-[cytochrome c] + 2 H2O + 4 H(+)(out). The protein operates within energy metabolism; oxidative phosphorylation. Its function is as follows. Component of the cytochrome c oxidase, the last enzyme in the mitochondrial electron transport chain which drives oxidative phosphorylation. The respiratory chain contains 3 multisubunit complexes succinate dehydrogenase (complex II, CII), ubiquinol-cytochrome c oxidoreductase (cytochrome b-c1 complex, complex III, CIII) and cytochrome c oxidase (complex IV, CIV), that cooperate to transfer electrons derived from NADH and succinate to molecular oxygen, creating an electrochemical gradient over the inner membrane that drives transmembrane transport and the ATP synthase. Cytochrome c oxidase is the component of the respiratory chain that catalyzes the reduction of oxygen to water. Electrons originating from reduced cytochrome c in the intermembrane space (IMS) are transferred via the dinuclear copper A center (CU(A)) of subunit 2 and heme A of subunit 1 to the active site in subunit 1, a binuclear center (BNC) formed by heme A3 and copper B (CU(B)). The BNC reduces molecular oxygen to 2 water molecules using 4 electrons from cytochrome c in the IMS and 4 protons from the mitochondrial matrix. This chain is Cytochrome c oxidase subunit 1 (COX1), found in Wickerhamomyces canadensis (Yeast).